A 208-amino-acid polypeptide reads, in one-letter code: Large ribosomal subunit protein uL3 (208 aa).

Positions 130–168 (GGSKTHGQSDRLRAPGSVGGSSFPSRTFKGQRMAGRKGS) are disordered.

This sequence belongs to the universal ribosomal protein uL3 family. In terms of assembly, part of the 50S ribosomal subunit. Forms a cluster with proteins L14 and L19.

Functionally, one of the primary rRNA binding proteins, it binds directly near the 3'-end of the 23S rRNA, where it nucleates assembly of the 50S subunit. The sequence is that of Large ribosomal subunit protein uL3 from Chloroherpeton thalassium (strain ATCC 35110 / GB-78).